The primary structure comprises 240 residues: tRNA (guanine-N(1)-)-methyltransferase (240 aa).

Residues Gly110 and 129–134 (LGDFVL) each bind S-adenosyl-L-methionine.

Belongs to the RNA methyltransferase TrmD family. In terms of assembly, homodimer.

The protein resides in the cytoplasm. The enzyme catalyses guanosine(37) in tRNA + S-adenosyl-L-methionine = N(1)-methylguanosine(37) in tRNA + S-adenosyl-L-homocysteine + H(+). Its function is as follows. Specifically methylates guanosine-37 in various tRNAs. The polypeptide is tRNA (guanine-N(1)-)-methyltransferase (Clostridium botulinum (strain Loch Maree / Type A3)).